A 498-amino-acid polypeptide reads, in one-letter code: Lysine--tRNA ligase (498 aa).

Residues Glu409 and Glu416 each coordinate Mg(2+).

It belongs to the class-II aminoacyl-tRNA synthetase family. As to quaternary structure, homodimer. Mg(2+) is required as a cofactor.

It is found in the cytoplasm. It catalyses the reaction tRNA(Lys) + L-lysine + ATP = L-lysyl-tRNA(Lys) + AMP + diphosphate. The sequence is that of Lysine--tRNA ligase from Dichelobacter nodosus (strain VCS1703A).